The sequence spans 188 residues: Protein SYC1 (188 aa).

In terms of assembly, component of the cleavage and polyadenylation factor (CPF) complex, which is composed of at least PTI1, SYC1, SSU72, GLC7, MPE1, REF2, PFS2, PTA1, YSH1/BRR5, SWD2, CFT2/YDH1, YTH1, CFT1/YHH1, FIP1 and PAP1. Component of the APT complex, which is a subcomplex of CPF, and is composed of PTI1, SYC1, SSU72, GLC7, REF2, PTA1 and SWD2.

The protein localises to the nucleus. Functionally, component of the cleavage and polyadenylation factor (CPF) complex, which plays a key role in polyadenylation-dependent pre-mRNA 3'-end formation and cooperates with cleavage factors including the CFIA complex and NAB4/CFIB. Component of the APT complex, which may be involved in polyadenylation-independent transcript 3'-end formation, including snoRNAs and snRNAs. This is Protein SYC1 (SYC1) from Saccharomyces cerevisiae (strain ATCC 204508 / S288c) (Baker's yeast).